A 488-amino-acid polypeptide reads, in one-letter code: Cobyric acid synthase (488 aa).

The region spanning 250–438 is the GATase cobBQ-type domain; the sequence is DITIAIIRLP…LHGIFDNGSW (189 aa). Cys331 acts as the Nucleophile in catalysis. His430 is an active-site residue.

It belongs to the CobB/CobQ family. CobQ subfamily.

Its pathway is cofactor biosynthesis; adenosylcobalamin biosynthesis. Its function is as follows. Catalyzes amidations at positions B, D, E, and G on adenosylcobyrinic A,C-diamide. NH(2) groups are provided by glutamine, and one molecule of ATP is hydrogenolyzed for each amidation. The protein is Cobyric acid synthase of Trichodesmium erythraeum (strain IMS101).